The primary structure comprises 193 residues: Ion-translocating oxidoreductase complex subunit A (193 aa).

6 helical membrane passes run 5-25 (LLLF…FLGL), 39-59 (IGMG…AWMV), 62-82 (FILL…LVIA), 102-122 (LLGI…VALL), 134-154 (AVYG…FAAI), and 171-191 (SIAL…TGLV).

It belongs to the NqrDE/RnfAE family. In terms of assembly, the complex is composed of six subunits: RnfA, RnfB, RnfC, RnfD, RnfE and RnfG.

Its subcellular location is the cell inner membrane. Its function is as follows. Part of a membrane-bound complex that couples electron transfer with translocation of ions across the membrane. The polypeptide is Ion-translocating oxidoreductase complex subunit A (Yersinia enterocolitica serotype O:8 / biotype 1B (strain NCTC 13174 / 8081)).